The following is a 279-amino-acid chain: Eukaryotic translation initiation factor 3 subunit J (279 aa).

2 disordered regions span residues 1-74 (MSWD…SQKS) and 229-279 (ERQA…DDFM). Over residues 20 to 39 (WEDEDNDDPLLESWDIDEEE) the composition is skewed to acidic residues. The stretch at 34–74 (DIDEEEVARKKKEEEAKKKAEKEALKQKQQEAKNKKLSQKS) forms a coiled coil. Residues 40-67 (VARKKKEEEAKKKAEKEALKQKQQEAKN) show a composition bias toward basic and acidic residues. A compositionally biased stretch (acidic residues) spans 268-279 (DDFDDFDDDDFM).

Belongs to the eIF-3 subunit J family. In terms of assembly, component of the eukaryotic translation initiation factor 3 (eIF-3) complex.

The protein resides in the cytoplasm. Component of the eukaryotic translation initiation factor 3 (eIF-3) complex, which is involved in protein synthesis of a specialized repertoire of mRNAs and, together with other initiation factors, stimulates binding of mRNA and methionyl-tRNAi to the 40S ribosome. The eIF-3 complex specifically targets and initiates translation of a subset of mRNAs involved in cell proliferation. In Meyerozyma guilliermondii (strain ATCC 6260 / CBS 566 / DSM 6381 / JCM 1539 / NBRC 10279 / NRRL Y-324) (Yeast), this protein is Eukaryotic translation initiation factor 3 subunit J.